Reading from the N-terminus, the 116-residue chain is Nucleoid-associated protein PMT9312_0020 (116 aa).

It belongs to the YbaB/EbfC family. Homodimer.

The protein localises to the cytoplasm. The protein resides in the nucleoid. Its function is as follows. Binds to DNA and alters its conformation. May be involved in regulation of gene expression, nucleoid organization and DNA protection. The chain is Nucleoid-associated protein PMT9312_0020 from Prochlorococcus marinus (strain MIT 9312).